The sequence spans 64 residues: Bactridin-2 (64 aa).

In terms of domain architecture, LCN-type CS-alpha/beta spans 1–63 (KDGYLVGNDG…TWNRATNRCG (63 aa)). 4 disulfide bridges follow: C11/C62, C15/C37, C23/C43, and C27/C45.

Belongs to the long (4 C-C) scorpion toxin superfamily. Sodium channel inhibitor family. Beta subfamily. As to expression, expressed by the venom gland.

It is found in the secreted. Its function is as follows. Shows antibacterial activity against both Gram-positive bacteria (B.subtilis, M.luteus, E.faecalis) and Gram-negative bacteria (P.aeruginosa, Y.enterocolitica, A.calcoaceticus). Modifies membrane sodium permeability on Y.enterocolitica. Is toxic to mice, but is not to crabs. Induces concentration dependent haemolysis in human erythrocytes. Acts by inhibiting the sodium (Nav) currents. This chain is Bactridin-2, found in Tityus discrepans (Venezuelan scorpion).